The chain runs to 525 residues: GMP synthase [glutamine-hydrolyzing] (525 aa).

One can recognise a Glutamine amidotransferase type-1 domain in the interval 9 to 207 (RILILDFGSQ…VLGICGCEAL (199 aa)). Catalysis depends on Cys86, which acts as the Nucleophile. Residues His181 and Glu183 contribute to the active site. One can recognise a GMPS ATP-PPase domain in the interval 208 to 400 (WTSATIIEDA…LGLPYDMLYR (193 aa)). 235–241 (SGGVDSS) contributes to the ATP binding site.

In terms of assembly, homodimer.

The enzyme catalyses XMP + L-glutamine + ATP + H2O = GMP + L-glutamate + AMP + diphosphate + 2 H(+). The protein operates within purine metabolism; GMP biosynthesis; GMP from XMP (L-Gln route): step 1/1. Catalyzes the synthesis of GMP from XMP. This chain is GMP synthase [glutamine-hydrolyzing], found in Yersinia pestis bv. Antiqua (strain Antiqua).